The chain runs to 132 residues: Small ribosomal subunit protein eS6 (132 aa).

Belongs to the eukaryotic ribosomal protein eS6 family.

In Methanoculleus marisnigri (strain ATCC 35101 / DSM 1498 / JR1), this protein is Small ribosomal subunit protein eS6.